Here is a 241-residue protein sequence, read N- to C-terminus: ATP synthase subunit a (241 aa).

The next 5 membrane-spanning stretches (helical) occupy residues 21–41, 84–104, 116–136, 183–203, and 207–227; these read LASI…AIAC, VTLI…AIVI, DATV…YYGI, ILIG…WIIG, and LIAW…IFIM.

It belongs to the ATPase A chain family. F-type ATPases have 2 components, CF(1) - the catalytic core - and CF(0) - the membrane proton channel. CF(1) has five subunits: alpha(3), beta(3), gamma(1), delta(1), epsilon(1). CF(0) has three main subunits: a(1), b(2) and c(9-12). The alpha and beta chains form an alternating ring which encloses part of the gamma chain. CF(1) is attached to CF(0) by a central stalk formed by the gamma and epsilon chains, while a peripheral stalk is formed by the delta and b chains.

Its subcellular location is the cell membrane. Its function is as follows. Key component of the proton channel; it plays a direct role in the translocation of protons across the membrane. The sequence is that of ATP synthase subunit a from Staphylococcus carnosus (strain TM300).